Consider the following 417-residue polypeptide: Serine hydroxymethyltransferase (417 aa).

(6S)-5,6,7,8-tetrahydrofolate-binding positions include Leu-121 and 125-127; that span reads GHL. An N6-(pyridoxal phosphate)lysine modification is found at Lys-229. 354–356 contributes to the (6S)-5,6,7,8-tetrahydrofolate binding site; it reads SPF.

The protein belongs to the SHMT family. In terms of assembly, homodimer. Pyridoxal 5'-phosphate serves as cofactor.

It is found in the cytoplasm. It carries out the reaction (6R)-5,10-methylene-5,6,7,8-tetrahydrofolate + glycine + H2O = (6S)-5,6,7,8-tetrahydrofolate + L-serine. Its pathway is one-carbon metabolism; tetrahydrofolate interconversion. It functions in the pathway amino-acid biosynthesis; glycine biosynthesis; glycine from L-serine: step 1/1. Catalyzes the reversible interconversion of serine and glycine with tetrahydrofolate (THF) serving as the one-carbon carrier. This reaction serves as the major source of one-carbon groups required for the biosynthesis of purines, thymidylate, methionine, and other important biomolecules. Also exhibits THF-independent aldolase activity toward beta-hydroxyamino acids, producing glycine and aldehydes, via a retro-aldol mechanism. In Dichelobacter nodosus (strain VCS1703A), this protein is Serine hydroxymethyltransferase.